Consider the following 273-residue polypeptide: Undecaprenyl-diphosphatase (273 aa).

7 consecutive transmembrane segments (helical) span residues 4–24, 43–63, 83–103, 109–129, 184–204, 218–238, and 248–268; these read FLLL…FLPI, KGKV…CWEY, FVLN…LFIK, LFHP…ILWA, ATEF…FYDL, VFAI…RGLL, and VFAW…YSGM.

This sequence belongs to the UppP family.

The protein resides in the cell inner membrane. The catalysed reaction is di-trans,octa-cis-undecaprenyl diphosphate + H2O = di-trans,octa-cis-undecaprenyl phosphate + phosphate + H(+). Functionally, catalyzes the dephosphorylation of undecaprenyl diphosphate (UPP). Confers resistance to bacitracin. This chain is Undecaprenyl-diphosphatase, found in Nitrosospira multiformis (strain ATCC 25196 / NCIMB 11849 / C 71).